A 156-amino-acid polypeptide reads, in one-letter code: Small ribosomal subunit protein uS7 (156 aa).

Belongs to the universal ribosomal protein uS7 family. In terms of assembly, part of the 30S ribosomal subunit. Contacts proteins S9 and S11.

Its function is as follows. One of the primary rRNA binding proteins, it binds directly to 16S rRNA where it nucleates assembly of the head domain of the 30S subunit. Is located at the subunit interface close to the decoding center, probably blocks exit of the E-site tRNA. This chain is Small ribosomal subunit protein uS7, found in Acinetobacter baylyi (strain ATCC 33305 / BD413 / ADP1).